We begin with the raw amino-acid sequence, 807 residues long: Leucine--tRNA ligase (807 aa).

Positions 38-49 (PYPSGSGLHVGH) match the 'HIGH' region motif. The 'KMSKS' region signature appears at 579–583 (KMSKS). K582 lines the ATP pocket.

Belongs to the class-I aminoacyl-tRNA synthetase family.

Its subcellular location is the cytoplasm. The enzyme catalyses tRNA(Leu) + L-leucine + ATP = L-leucyl-tRNA(Leu) + AMP + diphosphate. The protein is Leucine--tRNA ligase of Mycoplasmopsis pulmonis (strain UAB CTIP) (Mycoplasma pulmonis).